The sequence spans 264 residues: Phosphonoacetaldehyde hydrolase (264 aa).

Aspartate 9 functions as the Nucleophile in the catalytic mechanism. 2 residues coordinate Mg(2+): aspartate 9 and alanine 11. The Schiff-base intermediate with substrate role is filled by lysine 50. Mg(2+) is bound at residue aspartate 183.

This sequence belongs to the HAD-like hydrolase superfamily. PhnX family. In terms of assembly, homodimer. It depends on Mg(2+) as a cofactor.

It carries out the reaction phosphonoacetaldehyde + H2O = acetaldehyde + phosphate + H(+). Its function is as follows. Involved in phosphonate degradation. The protein is Phosphonoacetaldehyde hydrolase of Bacillus cereus (strain AH820).